A 395-amino-acid polypeptide reads, in one-letter code: uncharacterized protein (395 aa).

Positions 1–18 are cleaved as a signal peptide; sequence MKHVIMLYFIAAATLFSS. Cysteine 19 carries the N-palmitoyl cysteine lipid modification. Cysteine 19 carries the S-diacylglycerol cysteine lipid modification.

Its subcellular location is the cell outer membrane. In terms of biological role, may be involved in ulvan degradation. Ulvan is the main polysaccharide component of the Ulvales (green seaweed) cell wall. It is composed of disaccharide building blocks comprising 3-sulfated rhamnose (Rha3S) linked to D-glucuronic acid (GlcA), L-iduronic acid (IduA), or D-xylose (Xyl). This is an uncharacterized protein from Formosa agariphila (strain DSM 15362 / KCTC 12365 / LMG 23005 / KMM 3901 / M-2Alg 35-1).